Reading from the N-terminus, the 494-residue chain is Ketol-acid reductoisomerase (NADP(+)) (494 aa).

The KARI N-terminal Rossmann domain occupies 14 to 208 (LDQLGRCRFM…GGHRAGVLES (195 aa)). Residues 45 to 48 (CGAQ), Arg68, Arg76, Ser78, and 108 to 110 (DKQ) contribute to the NADP(+) site. His132 is an active-site residue. NADP(+) is bound at residue Gly158. 2 KARI C-terminal knotted domains span residues 209–344 (SFVA…NYPV) and 345–487 (TDVE…MTDM). Mg(2+) is bound by residues Asp217, Glu221, Glu389, and Glu393. Ser414 provides a ligand contact to substrate.

It belongs to the ketol-acid reductoisomerase family. Mg(2+) is required as a cofactor.

It catalyses the reaction (2R)-2,3-dihydroxy-3-methylbutanoate + NADP(+) = (2S)-2-acetolactate + NADPH + H(+). It carries out the reaction (2R,3R)-2,3-dihydroxy-3-methylpentanoate + NADP(+) = (S)-2-ethyl-2-hydroxy-3-oxobutanoate + NADPH + H(+). It participates in amino-acid biosynthesis; L-isoleucine biosynthesis; L-isoleucine from 2-oxobutanoate: step 2/4. The protein operates within amino-acid biosynthesis; L-valine biosynthesis; L-valine from pyruvate: step 2/4. Its function is as follows. Involved in the biosynthesis of branched-chain amino acids (BCAA). Catalyzes an alkyl-migration followed by a ketol-acid reduction of (S)-2-acetolactate (S2AL) to yield (R)-2,3-dihydroxy-isovalerate. In the isomerase reaction, S2AL is rearranged via a Mg-dependent methyl migration to produce 3-hydroxy-3-methyl-2-ketobutyrate (HMKB). In the reductase reaction, this 2-ketoacid undergoes a metal-dependent reduction by NADPH to yield (R)-2,3-dihydroxy-isovalerate. The chain is Ketol-acid reductoisomerase (NADP(+)) from Photobacterium profundum (strain SS9).